The primary structure comprises 69 residues: Cytochrome c oxidase subunit 8A, mitochondrial (69 aa).

The transit peptide at 1 to 25 (MSVLTPLLLRGLTGSARRLPVPRAQ) directs the protein to the mitochondrion. An SIFI-degron motif is present at residues 2–19 (SVLTPLLLRGLTGSARRL). Residues 26–36 (VHSMPPEQKLG) are Mitochondrial matrix-facing. A helical transmembrane segment spans residues 37-60 (VLELAIGFTSCLVTFLLPAGWILS). Topologically, residues 61-69 (HLDSYKKRG) are mitochondrial intermembrane.

The protein belongs to the cytochrome c oxidase VIII family. In terms of assembly, component of the cytochrome c oxidase (complex IV, CIV), a multisubunit enzyme composed of 14 subunits. The complex is composed of a catalytic core of 3 subunits MT-CO1, MT-CO2 and MT-CO3, encoded in the mitochondrial DNA, and 11 supernumerary subunits COX4I, COX5A, COX5B, COX6A, COX6B, COX6C, COX7A, COX7B, COX7C, COX8 and NDUFA4, which are encoded in the nuclear genome. The complex exists as a monomer or a dimer and forms supercomplexes (SCs) in the inner mitochondrial membrane with NADH-ubiquinone oxidoreductase (complex I, CI) and ubiquinol-cytochrome c oxidoreductase (cytochrome b-c1 complex, complex III, CIII), resulting in different assemblies (supercomplex SCI(1)III(2)IV(1) and megacomplex MCI(2)III(2)IV(2)). In terms of processing, in response to mitochondrial stress, the precursor protein is ubiquitinated by the SIFI complex in the cytoplasm before mitochondrial import, leading to its degradation. Within the SIFI complex, UBR4 initiates ubiquitin chain that are further elongated or branched by KCMF1.

Its subcellular location is the mitochondrion inner membrane. It functions in the pathway energy metabolism; oxidative phosphorylation. Functionally, component of the cytochrome c oxidase, the last enzyme in the mitochondrial electron transport chain which drives oxidative phosphorylation. The respiratory chain contains 3 multisubunit complexes succinate dehydrogenase (complex II, CII), ubiquinol-cytochrome c oxidoreductase (cytochrome b-c1 complex, complex III, CIII) and cytochrome c oxidase (complex IV, CIV), that cooperate to transfer electrons derived from NADH and succinate to molecular oxygen, creating an electrochemical gradient over the inner membrane that drives transmembrane transport and the ATP synthase. Cytochrome c oxidase is the component of the respiratory chain that catalyzes the reduction of oxygen to water. Electrons originating from reduced cytochrome c in the intermembrane space (IMS) are transferred via the dinuclear copper A center (CU(A)) of subunit 2 and heme A of subunit 1 to the active site in subunit 1, a binuclear center (BNC) formed by heme A3 and copper B (CU(B)). The BNC reduces molecular oxygen to 2 water molecules using 4 electrons from cytochrome c in the IMS and 4 protons from the mitochondrial matrix. This is Cytochrome c oxidase subunit 8A, mitochondrial (COX8A) from Saimiri sciureus (Common squirrel monkey).